Reading from the N-terminus, the 216-residue chain is Trypsin inhibitor A (216 aa).

A signal peptide spans 1 to 24 (MKSTIFFLFLFCAFTTSYLPSAIA). 2 disulfide bridges follow: Cys-63/Cys-110 and Cys-160/Cys-169. A propeptide spanning residues 206–216 (AKKNHGLSRSE) is cleaved from the precursor.

Belongs to the protease inhibitor I3 (leguminous Kunitz-type inhibitor) family.

In terms of biological role, inhibition of trypsin. The chain is Trypsin inhibitor A (KTI3) from Glycine max (Soybean).